Here is a 393-residue protein sequence, read N- to C-terminus: MANKEKLPWDLEEEILSRVPPTSLDRFKTVCKRWNALFNDKTFINNHKMTFQFVLSTRSKIYSVSVNPKVEVRELTLNNPGLKAQRHKNLFATSGLLLCDVGNGAVVWNPWLKQSRCIKLEVNEPSLDFLGIGYDNNKRVEEIVYKTLSVYMKDLGSQYTWKIHDFASDTWIDQEIEKTKYSRRITEGSVTIRLTNLSVVSLNGKFFKFCDLPSGKNRRRDALALRVFREDRFSLLRQCHVTKKIKIWVTKNKIDNRYGGDVKWMSFMEVSIPTMPDLEHPKFNSQPSYFIDDKRLVICSCDETGRAWIYVVGGNKLVSKTQLDSVVDPWPLHCTYFPSLVLVPGGQREEAELQVQFQFPYLCFSYMEAKNLHVTTELYVPGKTKSSIKLHYG.

In terms of domain architecture, F-box spans 1–47; it reads MANKEKLPWDLEEEILSRVPPTSLDRFKTVCKRWNALFNDKTFINNH. Kelch repeat units lie at residues 151–199 and 308–357; these read YMKD…NLSV and WIYV…QVQF.

The chain is Putative F-box/kelch-repeat protein At1g32430 from Arabidopsis thaliana (Mouse-ear cress).